The sequence spans 310 residues: Protoheme IX farnesyltransferase (310 aa).

The next 9 membrane-spanning stretches (helical) occupy residues 37–57 (LITV…DVLL), 64–84 (LTLL…CYLN), 113–133 (ILAL…IVNH), 134–154 (VAAV…TMWL), 159–181 (TINT…AAVT), 186–208 (IDAW…ALAM), 215–237 (RAAG…QIVW), 257–277 (MLVM…GLKI), and 290–310 (MFFF…LVSL).

This sequence belongs to the UbiA prenyltransferase family. Protoheme IX farnesyltransferase subfamily. Interacts with CtaA.

Its subcellular location is the cell membrane. The enzyme catalyses heme b + (2E,6E)-farnesyl diphosphate + H2O = Fe(II)-heme o + diphosphate. Its pathway is porphyrin-containing compound metabolism; heme O biosynthesis; heme O from protoheme: step 1/1. Its function is as follows. Converts heme B (protoheme IX) to heme O by substitution of the vinyl group on carbon 2 of heme B porphyrin ring with a hydroxyethyl farnesyl side group. The polypeptide is Protoheme IX farnesyltransferase (Exiguobacterium sibiricum (strain DSM 17290 / CCUG 55495 / CIP 109462 / JCM 13490 / 255-15)).